The chain runs to 110 residues: Single-stranded DNA-binding protein 1 (110 aa).

The SSB domain maps to M1–E104.

Homotetramer.

This is Single-stranded DNA-binding protein 1 (ssb1) from Clostridium acetobutylicum (strain ATCC 824 / DSM 792 / JCM 1419 / IAM 19013 / LMG 5710 / NBRC 13948 / NRRL B-527 / VKM B-1787 / 2291 / W).